We begin with the raw amino-acid sequence, 298 residues long: Cholesterol 25-hydroxylase (298 aa).

A glycan (N-linked (GlcNAc...) asparagine) is linked at asparagine 5. 3 helical membrane-spanning segments follow: residues 38-58 (IFPV…FVVL), 88-108 (LGLT…LHWV), and 124-144 (LLSH…AWHL). The 136-residue stretch at 128 to 263 (VLICLLLFDT…FTHWDKMLGT (136 aa)) folds into the Fatty acid hydroxylase domain. The Histidine box-1 signature appears at 142–146 (WHLLH). Residues 157–161 (HKVHH) carry the Histidine box-2 motif. Asparagine 163 carries N-linked (GlcNAc...) asparagine glycosylation. Positions 238–244 (HHDMHHS) match the Histidine box-3 motif.

Belongs to the sterol desaturase family. It depends on Fe cation as a cofactor. Post-translationally, N-glycosylated. In terms of tissue distribution, widely expressed at low level and at higher level in the lung. Weakly expressed in the heart, lung and kidney.

It is found in the endoplasmic reticulum membrane. The enzyme catalyses cholesterol + AH2 + O2 = 25-hydroxycholesterol + A + H2O. The catalysed reaction is cholesterol + NADPH + O2 + H(+) = 25-hydroxycholesterol + NADP(+) + H2O. Catalyzes the formation of 25-hydroxycholesterol from cholesterol, leading to repress cholesterol biosynthetic enzymes. Plays a key role in cell positioning and movement in lymphoid tissues: 25-hydroxycholesterol is an intermediate in biosynthesis of 7-alpha,25-dihydroxycholesterol (7-alpha,25-OHC), an oxysterol that acts as a ligand for the G protein-coupled receptor GPR183/EBI2, a chemotactic receptor for a number of lymphoid cells. May play an important role in regulating lipid metabolism by synthesizing a corepressor that blocks sterol regulatory element binding protein (SREBP) processing. In testis, production of 25-hydroxycholesterol by macrophages may play a role in Leydig cell differentiation. Required to restrain inflammation in macrophages: production of 25-hydroxycholesterol protects macrophages from cholesterol overload, thereby preventing mitochondrial DNA release and subsequent activation of the AIM2 inflammasome. Interferon-stimulated gene which has broad antiviral activities against a wide range of enveloped viruses. The chain is Cholesterol 25-hydroxylase from Mus musculus (Mouse).